The following is a 138-amino-acid chain: Acidic phospholipase A2 DsM-a2/DsM-a2' (138 aa).

A signal peptide spans 1–16 (MRTLWIVAVCLIGVEG). 7 cysteine pairs are disulfide-bonded: cysteine 42-cysteine 131, cysteine 44-cysteine 60, cysteine 59-cysteine 111, cysteine 65-cysteine 138, cysteine 66-cysteine 104, cysteine 73-cysteine 97, and cysteine 91-cysteine 102. The Ca(2+) site is built by tyrosine 43, glycine 45, and glycine 47. Histidine 63 is an active-site residue. Aspartate 64 provides a ligand contact to Ca(2+). Aspartate 105 is a catalytic residue.

This sequence belongs to the phospholipase A2 family. Group II subfamily. D49 sub-subfamily. The cofactor is Ca(2+). As to expression, expressed by the venom gland.

It is found in the secreted. It carries out the reaction a 1,2-diacyl-sn-glycero-3-phosphocholine + H2O = a 1-acyl-sn-glycero-3-phosphocholine + a fatty acid + H(+). Its function is as follows. Exhibits high hydrolytic activities and shows strong preference for the anionic micelles (dPPC with deoxycholate) to the zwitterionic micelles (dPPC with Triton X-100). PLA2 catalyzes the calcium-dependent hydrolysis of the 2-acyl groups in 3-sn-phosphoglycerides. The protein is Acidic phospholipase A2 DsM-a2/DsM-a2' of Daboia siamensis (Eastern Russel's viper).